The primary structure comprises 730 residues: Polyribonucleotide nucleotidyltransferase (730 aa).

The Mg(2+) site is built by Asp494 and Asp500. The 62-residue stretch at 561-622 folds into the KH domain; the sequence is PRIQTIQIDP…EAMNRAIQEI (62 aa). Residues 642–711 enclose the S1 motif domain; that stretch reads GKIYTGRVTG…RSGKVRLSRK (70 aa).

It belongs to the polyribonucleotide nucleotidyltransferase family. Mg(2+) is required as a cofactor.

Its subcellular location is the cytoplasm. It carries out the reaction RNA(n+1) + phosphate = RNA(n) + a ribonucleoside 5'-diphosphate. Functionally, involved in mRNA degradation. Catalyzes the phosphorolysis of single-stranded polyribonucleotides processively in the 3'- to 5'-direction. This Opitutus terrae (strain DSM 11246 / JCM 15787 / PB90-1) protein is Polyribonucleotide nucleotidyltransferase.